A 103-amino-acid polypeptide reads, in one-letter code: Large ribosomal subunit protein uL24 (103 aa).

The protein belongs to the universal ribosomal protein uL24 family. Part of the 50S ribosomal subunit.

One of two assembly initiator proteins, it binds directly to the 5'-end of the 23S rRNA, where it nucleates assembly of the 50S subunit. Its function is as follows. One of the proteins that surrounds the polypeptide exit tunnel on the outside of the subunit. The protein is Large ribosomal subunit protein uL24 of Roseobacter denitrificans (strain ATCC 33942 / OCh 114) (Erythrobacter sp. (strain OCh 114)).